The chain runs to 349 residues: Transcription factor HBP-1a (349 aa).

Polar residues predominate over residues Met1–Lys11. 4 disordered regions span residues Met1 to Phe39, Phe101 to Met196, Gly224 to Cys277, and Asn312 to Pro349. Positions Pro113–Ala124 are enriched in low complexity. The segment covering Asn174–Thr191 has biased composition (polar residues). The 64-residue stretch at Glu252–Leu315 folds into the bZIP domain. Residues Lys254–Lys273 form a basic motif region. Positions Ser261–Cys277 are enriched in basic and acidic residues. The tract at residues Leu280 to Leu315 is leucine-zipper. The segment covering Met334 to Pro349 has biased composition (basic and acidic residues).

The protein belongs to the bZIP family. As to quaternary structure, binds DNA as a dimer.

It is found in the nucleus. Its function is as follows. Binds to the hexamer motif 5'-ACGTCA-3' of histone gene promoters. This chain is Transcription factor HBP-1a, found in Triticum aestivum (Wheat).